Reading from the N-terminus, the 54-residue chain is Large ribosomal subunit protein bL33A (54 aa).

The protein belongs to the bacterial ribosomal protein bL33 family.

This chain is Large ribosomal subunit protein bL33A, found in Mycolicibacterium gilvum (strain PYR-GCK) (Mycobacterium gilvum (strain PYR-GCK)).